Reading from the N-terminus, the 122-residue chain is Large ribosomal subunit protein uL18 (122 aa).

It belongs to the universal ribosomal protein uL18 family. As to quaternary structure, part of the 50S ribosomal subunit; part of the 5S rRNA/L5/L18/L25 subcomplex. Contacts the 5S and 23S rRNAs.

In terms of biological role, this is one of the proteins that bind and probably mediate the attachment of the 5S RNA into the large ribosomal subunit, where it forms part of the central protuberance. This chain is Large ribosomal subunit protein uL18, found in Fervidobacterium nodosum (strain ATCC 35602 / DSM 5306 / Rt17-B1).